A 115-amino-acid polypeptide reads, in one-letter code: Probable 4-amino-4-deoxy-L-arabinose-phosphoundecaprenol flippase subunit ArnE (115 aa).

Transmembrane regions (helical) follow at residues 42–62 (PWPWLALLALGLGLLCWLLLL), 65–85 (VEVGSAYPMLALNFVLVTLAA), and 93–112 (VDRRHLAGLLLIVAGVALLG). In terms of domain architecture, EamA spans 46–113 (LALLALGLGL…IVAGVALLGR (68 aa)).

The protein belongs to the ArnE family. As to quaternary structure, heterodimer of ArnE and ArnF.

It localises to the cell inner membrane. The protein operates within bacterial outer membrane biogenesis; lipopolysaccharide biosynthesis. Its function is as follows. Translocates 4-amino-4-deoxy-L-arabinose-phosphoundecaprenol (alpha-L-Ara4N-phosphoundecaprenol) from the cytoplasmic to the periplasmic side of the inner membrane. This Pseudomonas aeruginosa (strain LESB58) protein is Probable 4-amino-4-deoxy-L-arabinose-phosphoundecaprenol flippase subunit ArnE.